Consider the following 2359-residue polypeptide: Voltage-dependent T-type calcium channel subunit alpha-1H (2359 aa).

The segment at 1 to 63 (MTEGTLAADE…PGTECGADLG (63 aa)) is disordered. At 1-100 (MTEGTLAADE…SWCLRLVCNP (100 aa)) the chain is on the cytoplasmic side. Positions 24–36 (APVRASPASPGAP) are enriched in low complexity. An I repeat occupies 87–422 (TRPRSWCLRL…LCLVVIATQF (336 aa)). A helical membrane pass occupies residues 101 to 119 (WFEHISMLVIMLNCVTLGM). Residues 120–141 (FRPCEDVECRSERCSILEAFDD) are Extracellular-facing. Position 140 (Asp140) interacts with Zn(2+). Residues 142–160 (FIFAFFAVEMVIKMVALGL) form a helical membrane-spanning segment. Topologically, residues 161–169 (FGQKCYLGD) are cytoplasmic. The helical transmembrane segment at 170-184 (TWNRLDFFIVMAGMM) threads the bilayer. The Extracellular segment spans residues 185–193 (EYSLDGHNV). Zn(2+) is bound by residues Asp189 and His191. An N-linked (GlcNAc...) asparagine glycan is attached at Asn192. The helical transmembrane segment at 194 to 212 (SLSAIRTVRVLRPLRAINR) threads the bilayer. At 213 to 232 (VPSMRILVTLLLDTLPMLGN) the chain is on the cytoplasmic side. Residues 233–253 (VLLLCFFVFFIFGIVGVQLWA) form a helical membrane-spanning segment. Over 254–394 (GLLRNRCFLD…YYVMDAHSFY (141 aa)) the chain is Extracellular. N-linked (GlcNAc...) asparagine glycosylation occurs at Asn271. Residues 395–419 (NFIYFILLIIMGSFFMINLCLVVIA) traverse the membrane as a helical segment. At 420–790 (TQFSETKQRE…GKLRRIVDSK (371 aa)) the chain is on the cytoplasmic side. Disordered stretches follow at residues 490 to 573 (VDPS…SESV), 620 to 656 (GTVN…SPRP), and 737 to 769 (GDCR…ASQP). Residues 503–532 (RRPRRAGRRTASVHHLVYHHHHHHHHHYHF) show a composition bias toward basic residues. The span at 557 to 566 (PPSPPSPGHG) shows a compositional bias: pro residues. The span at 620–631 (GTVNSKGGTSSR) shows a compositional bias: polar residues. An II repeat occupies 776-1015 (WASFSGKLRR…LLVAILVEGF (240 aa)). A helical membrane pass occupies residues 791 to 811 (YFNRGIMAAILVNTLSMGVEY). The Extracellular portion of the chain corresponds to 812 to 824 (HEQPEELTNALEI). The chain crosses the membrane as a helical span at residues 825-846 (SNIVFTSMFALEMLLKLLACGP). Topologically, residues 847–852 (LGYIRN) are cytoplasmic. A helical transmembrane segment spans residues 853–871 (PYNIFDGIVVVISVWEIVG). The Extracellular segment spans residues 872–879 (QANGGLSV). The chain crosses the membrane as a helical span at residues 880–903 (LRTFRLLRVLKLVRFLPALRRQLV). At 904–914 (VLMRTMDNVAT) the chain is on the cytoplasmic side. The helical transmembrane segment at 915–935 (FCMLLMLFIFIFSILGMHLFG) threads the bilayer. Over 936-987 (CKFSLKTDSGDTVPDRKNFDSLLWAIVTVFQILTQEDWNVVLYNGMASTSSW) the chain is Extracellular. Residues 988-1012 (AALYFVALMTFGNYVLFNLLVAILV) form a helical membrane-spanning segment. The Cytoplasmic portion of the chain corresponds to 1013 to 1301 (EGFQAEGDAT…NRLRVSCQKV (289 aa)). Positions 1061 to 1197 (GHLEGRGSLP…GASPGPRATP (137 aa)) are disordered. Over residues 1117–1126 (SLASLRSSPC) the composition is skewed to polar residues. Residues 1130-1147 (GPNSAGSSRRSSWNSLGR) show a composition bias toward low complexity. One copy of the III repeat lies at 1292–1569 (NRLRVSCQKV…MFVGVVVENF (278 aa)). A helical transmembrane segment spans residues 1302–1324 (IAHKMFDHVVLVFIFLNCITIAL). Over 1325–1342 (ERPDIDPGSTERAFLSVS) the chain is Extracellular. A helical transmembrane segment spans residues 1343–1363 (NYIFTAIFVVEMMVKVVALGL). Residues 1364-1373 (LWGEHAYLQS) are Cytoplasmic-facing. Residues 1374–1393 (SWNVLDGLLVLVSLVDIIVA) form a helical membrane-spanning segment. Residues 1394–1407 (MASAGGAKILGVLR) are Extracellular-facing. A helical membrane pass occupies residues 1408–1429 (VLRLLRTLRPLRVISRAPGLKL). Residues 1430 to 1439 (VVETLISSLR) lie on the Cytoplasmic side of the membrane. A helical transmembrane segment spans residues 1440–1463 (PIGNIVLICCAFFIIFGILGVQLF). Over 1464–1540 (KGKFYYCEGT…DQQPVQNHNP (77 aa)) the chain is Extracellular. The N-linked (GlcNAc...) asparagine glycan is linked to Asn1477. A helical membrane pass occupies residues 1541–1566 (WMLLYFISFLLIVSFFVLNMFVGVVV). Residues 1567 to 1621 (ENFHKCRQHQEAEEARRREEKRLRRLERRRRKAQRRPYYADYSHTRRSIHSLCTS) lie on the Cytoplasmic side of the membrane. The IV repeat unit spans residues 1607–1868 (DYSHTRRSIH…VVVAVLMKHL (262 aa)). Residues 1622 to 1642 (HYLDLFITFIICLNVITMSME) traverse the membrane as a helical segment. Over 1643 to 1656 (HYNQPKSLDEALKY) the chain is Extracellular. Residues 1657 to 1678 (CNYVFTIVFVFEAALKLVAFGF) form a helical membrane-spanning segment. Topologically, residues 1679–1685 (RRFFKDR) are cytoplasmic. A helical transmembrane segment spans residues 1686-1704 (WNQLDLAIVLLSIMGIALE). Over 1705 to 1718 (EIEMNAALPINPTI) the chain is Extracellular. A helical membrane pass occupies residues 1719–1742 (IRIMRVLRIARVLKLLKMATGMRA). Topologically, residues 1743–1756 (LLDTVVQALPQVGN) are cytoplasmic. Residues 1757 to 1777 (LGLLFMLLFFIYAALGVELFG) form a helical membrane-spanning segment. Over 1778–1840 (RLECSEDNPC…KHCLSYLPAL (63 aa)) the chain is Extracellular. A helical transmembrane segment spans residues 1841–1868 (SPVYFVTFMLVAQFVLVNVVVAVLMKHL). Topologically, residues 1869-2359 (EESNKEARED…APDDSGDEPV (491 aa)) are cytoplasmic. Positions 1891 to 1911 (QGSTAQPPPTAQESQGTQPDT) are enriched in polar residues. Disordered regions lie at residues 1891–1913 (QGST…DTPN), 1974–2003 (SFQV…PRSL), 2016–2258 (HSES…GERW), and 2335–2359 (PQTP…DEPV). Over residues 2016-2026 (HSESLEGKVDD) the composition is skewed to basic and acidic residues. Acidic residues predominate over residues 2086-2096 (DEAEAADPADE). The segment covering 2166–2181 (GESHLESGEVRGRASE) has biased composition (basic and acidic residues).

Belongs to the calcium channel alpha-1 subunit (TC 1.A.1.11) family. CACNA1H subfamily. In terms of assembly, interacts (via N-terminal cytoplasmic domain) with STAC. In response to raising of intracellular calcium, the T-type channels are activated by CaM-kinase II. Expressed in brain.

Its subcellular location is the cell membrane. It carries out the reaction Ca(2+)(in) = Ca(2+)(out). Voltage-sensitive calcium channel that gives rise to T-type calcium currents. T-type calcium channels belong to the 'low-voltage activated (LVA)' group. A particularity of this type of channel is an opening at quite negative potentials, and a voltage-dependent inactivation. T-type channels serve pacemaking functions in both central neurons and cardiac nodal cells and support calcium signaling in secretory cells and vascular smooth muscle. They may also be involved in the modulation of firing patterns of neurons. In the adrenal zona glomerulosa, participates in the signaling pathway leading to aldosterone production in response to either AGT/angiotensin II, or hyperkalemia. The polypeptide is Voltage-dependent T-type calcium channel subunit alpha-1H (Cacna1h) (Rattus norvegicus (Rat)).